Consider the following 629-residue polypeptide: (-)-alpha pinene synthase 1, chloroplastic (629 aa).

A chloroplast-targeting transit peptide spans 1–48; the sequence is MSPVSVISLPSDLCLPTSFIDRSGRELNPLHITIPNVAMRRQGKLMTR. Residues aspartate 380, aspartate 384, and aspartate 532 each coordinate Mg(2+). The short motif at 380 to 384 is the DDXXD motif element; sequence DDMYD.

This sequence belongs to the terpene synthase family. Tpsd subfamily. Requires Mg(2+) as cofactor. The cofactor is Mn(2+).

Its subcellular location is the plastid. The protein resides in the chloroplast. It catalyses the reaction (2E)-geranyl diphosphate = (1S,5S)-alpha-pinene + diphosphate. The enzyme catalyses (2E)-geranyl diphosphate = (1S,5S)-beta-pinene + diphosphate. It functions in the pathway terpene metabolism; oleoresin biosynthesis. The protein operates within secondary metabolite biosynthesis; terpenoid biosynthesis. Functionally, monoterpene synthase (TPS) involved in the biosynthesis of monoterpene natural products included in conifer oleoresin secretions and volatile emissions; these compounds contribute to biotic and abiotic stress defense against herbivores and pathogens. Catalyzes the conversion of (2E)-geranyl diphosphate (GPP) to (-)-alpha-pinene and, to a lower extent, to (-)-beta-pinene. This chain is (-)-alpha pinene synthase 1, chloroplastic, found in Pinus contorta (Shore pine).